The sequence spans 148 residues: uncharacterized protein (148 aa).

A compositionally biased stretch (low complexity) spans 65–79 (VDSTPSVDSTGSTSD). A disordered region spans residues 65–85 (VDSTPSVDSTGSTSDVVDDRG).

This is an uncharacterized protein from Saccharomyces cerevisiae (strain ATCC 204508 / S288c) (Baker's yeast).